Reading from the N-terminus, the 861-residue chain is DNA mismatch repair protein MutS (861 aa).

Residue 613–620 (GPNMGGKS) participates in ATP binding.

This sequence belongs to the DNA mismatch repair MutS family.

In terms of biological role, this protein is involved in the repair of mismatches in DNA. It is possible that it carries out the mismatch recognition step. This protein has a weak ATPase activity. The chain is DNA mismatch repair protein MutS from Dichelobacter nodosus (strain VCS1703A).